The following is a 927-amino-acid chain: Protein LONGIFOLIA 1 (927 aa).

Disordered regions lie at residues 41 to 198 (TGDE…EGRR), 210 to 257 (YDER…GHRR), 460 to 588 (AQKV…SDSN), and 605 to 626 (YERN…DLGM). Low complexity predominate over residues 86–114 (SSESSSRLSFSSSPCSSSFSSADISTTAS). Over residues 115–125 (QFEQPGLSNGE) the composition is skewed to polar residues. Over residues 146–165 (DIRELVRSSIHKETRTRDEE) the composition is skewed to basic and acidic residues. Residues 182–193 (KESSPSRNSNEW) show a composition bias toward polar residues. Positions 210–226 (YDERETRKTGAKLKETP) are enriched in basic and acidic residues. Over residues 232–245 (SRSNSFRSARSSCS) the composition is skewed to low complexity. Polar residues-rich tracts occupy residues 483-500 (QTES…QSKS) and 538-553 (NKNQ…TESA). 2 stretches are compositionally biased toward basic and acidic residues: residues 569-584 (SEDR…RSLR) and 605-616 (YERNSDITEQHT).

As to quaternary structure, interacts (via C-terminus) with TON1A and TON1B. In terms of tissue distribution, expressed in roots, petioles, leaf blades and floral organs.

The protein resides in the nucleus. In terms of biological role, in association with LNG2, regulates leaf morphology by promoting longitudinal polar cell elongation independently of ROT3. This chain is Protein LONGIFOLIA 1 (LNG1), found in Arabidopsis thaliana (Mouse-ear cress).